A 302-amino-acid polypeptide reads, in one-letter code: MSKPDVAQVKAFLLQLQDEICRGLELADGAGHFVEDAWRREGGGGGRTRVLRHGAVIEQGGVNFSHVHGDAMPASATAHRPELAGRRFEAMGVSLVIHPHNPYVPTSHANVRFFIAEKEGEEPIWWFGGGFDLTPFYPFEEDVRHWHQLSRDLCQPFGTDIYPEFKSWCDRYFFLKHRDETRGVGGLFFDDLNRWPFADCFAFMQAVGKGYLDAYLPIVERRKALAYGEREREFQLYRRGRYVEFNLVYDRGTLFGLQTGGRTESILMSMPPLARWEYDWQPSAGSPEALLYSDYLKPREWL.

Substrate is bound at residue Ser-94. A divalent metal cation-binding residues include His-98 and His-108. The active-site Proton donor is the His-108. 110 to 112 (NVR) is a substrate binding site. A divalent metal cation is bound by residues His-147 and His-177. Residues 242-277 (YVEFNLVYDRGTLFGLQTGGRTESILMSMPPLARWE) form an important for dimerization region. Substrate is bound at residue 260 to 262 (GGR).

Belongs to the aerobic coproporphyrinogen-III oxidase family. Homodimer. A divalent metal cation serves as cofactor.

The protein resides in the cytoplasm. It catalyses the reaction coproporphyrinogen III + O2 + 2 H(+) = protoporphyrinogen IX + 2 CO2 + 2 H2O. Its pathway is porphyrin-containing compound metabolism; protoporphyrin-IX biosynthesis; protoporphyrinogen-IX from coproporphyrinogen-III (O2 route): step 1/1. Functionally, involved in the heme biosynthesis. Catalyzes the aerobic oxidative decarboxylation of propionate groups of rings A and B of coproporphyrinogen-III to yield the vinyl groups in protoporphyrinogen-IX. In Aeromonas hydrophila subsp. hydrophila (strain ATCC 7966 / DSM 30187 / BCRC 13018 / CCUG 14551 / JCM 1027 / KCTC 2358 / NCIMB 9240 / NCTC 8049), this protein is Oxygen-dependent coproporphyrinogen-III oxidase.